Consider the following 107-residue polypeptide: UPF0213 protein SG0387 (107 aa).

Residues 4–79 (SLWHLYLIRT…KQLSRAQKEH (76 aa)) enclose the GIY-YIG domain.

The protein belongs to the UPF0213 family.

This chain is UPF0213 protein SG0387, found in Sodalis glossinidius (strain morsitans).